A 456-amino-acid chain; its full sequence is tRNA modification GTPase MnmE (456 aa).

The (6S)-5-formyl-5,6,7,8-tetrahydrofolate site is built by arginine 25, glutamate 87, and arginine 126. The TrmE-type G domain maps to 221–377 (GLKVAIVGQP…LENAIIEQVN (157 aa)). Asparagine 231 contacts K(+). GTP contacts are provided by residues 231-236 (NVGKSS), 250-256 (TDLPGTT), and 275-278 (DTAG). Serine 235 provides a ligand contact to Mg(2+). Residues threonine 250, leucine 252, and threonine 255 each coordinate K(+). Residue threonine 256 coordinates Mg(2+). Residue lysine 456 participates in (6S)-5-formyl-5,6,7,8-tetrahydrofolate binding.

Belongs to the TRAFAC class TrmE-Era-EngA-EngB-Septin-like GTPase superfamily. TrmE GTPase family. Homodimer. Heterotetramer of two MnmE and two MnmG subunits. K(+) is required as a cofactor.

The protein localises to the cytoplasm. Its function is as follows. Exhibits a very high intrinsic GTPase hydrolysis rate. Involved in the addition of a carboxymethylaminomethyl (cmnm) group at the wobble position (U34) of certain tRNAs, forming tRNA-cmnm(5)s(2)U34. The protein is tRNA modification GTPase MnmE of Synechocystis sp. (strain ATCC 27184 / PCC 6803 / Kazusa).